The chain runs to 547 residues: Cdc42-interacting protein 4 (547 aa).

Positions 1 to 117 (MDWGTELWDQ…EMKQERKMHF (117 aa)) are required for translocation to the plasma membrane in response to insulin, podosome formation and interaction with AKAP9 and microtubules. Residues 1-264 (MDWGTELWDQ…AAESVDAKND (264 aa)) form the F-BAR domain. Residues 67–259 (FSQQQSFVQL…EGMKVAAESV (193 aa)) are a coiled coil. An interaction with CDC42 region spans residues 293 to 483 (RVPSDSSLGT…YTEFDEDFEE (191 aa)). Residues 293–547 (RVPSDSSLGT…PTSYLRVTLN (255 aa)) form an interaction with PDE6G region. Residues 294-323 (VPSDSSLGTPDGRPELRAASSRSRAKRWPF) form a disordered region. Serine 296, serine 298, and serine 299 each carry phosphoserine. Residues 332 to 425 (TEDFSHLPPE…ESRVLSNRGD (94 aa)) are a coiled coil. The REM-1 domain maps to 337–414 (HLPPEQQRKR…VQKYEAWLAE (78 aa)). Positions 415-547 (AESRVLSNRG…PTSYLRVTLN (133 aa)) are required for interaction with FASLG and localization to lysosomes. Residues 420–485 (LSNRGDSLSR…EFDEDFEEPA (66 aa)) are disordered. A Phosphoserine modification is found at serine 426. The interaction with DNM2 and WASL stretch occupies residues 431–487 (TRPPDPPTTAPPDSSSSSNNSGSQDNKESSEEPPSEEGQDTPIYTEFDEDFEEPASP). The segment covering 441 to 451 (PPDSSSSSNNS) has biased composition (low complexity). The segment at 476–547 (EFDEDFEEPA…PTSYLRVTLN (72 aa)) is interaction with DNM1 and WASL. Residues 484–547 (PASPIGQCVA…PTSYLRVTLN (64 aa)) are required for podosome formation. An SH3 domain is found at 486 to 547 (SPIGQCVAIY…PTSYLRVTLN (62 aa)). The interval 490–547 (QCVAIYHFEGSSEGTVSMSEGEDLSLMEEDKGDGWTRVRRKQGGEGYVPTSYLRVTLN) is interaction with WAS. The tract at residues 492-547 (VAIYHFEGSSEGTVSMSEGEDLSLMEEDKGDGWTRVRRKQGGEGYVPTSYLRVTLN) is interaction with ARHGAP17, DAAM1, DIAPH1 and DIAPH2.

The protein belongs to the FNBP1 family. As to quaternary structure, homodimerizes, the dimers can polymerize end-to-end to form filamentous structures. Interacts specifically with GTP-bound CDC42 and RHOQ. Interacts with AKAP9, ARHGAP17, DAAM1, DIAPH1, DIAPH2, DNM1, DNM2, FASLG/FASL, GAPVD1, LYN, microtubules, SRC, WAS/WASP and WASL/N-WASP. Interacts with the ligand binding domain of the thyroid receptor (TR) in the presence of thyroid hormone. May interact with CTNNB1 and HD/HTT. Interacts with PDE6G. Expressed in adrenal gland, aorta, brain, heart, kidney, liver, skeletal muscle and spleen.

It is found in the cytoplasm. It localises to the cytoskeleton. Its subcellular location is the cell cortex. The protein localises to the lysosome. The protein resides in the golgi apparatus. It is found in the cell membrane. It localises to the cell projection. Its subcellular location is the phagocytic cup. In terms of biological role, required to coordinate membrane tubulation with reorganization of the actin cytoskeleton during endocytosis. Also acts as a link between CDC42 signaling and regulation of the actin cytoskeleton. Binds to lipids such as phosphatidylinositol 4,5-bisphosphate and phosphatidylserine and promotes membrane invagination and the formation of tubules. Also enhances actin polymerization in the vicinity of membrane tubules by recruiting WASL/N-WASP which in turn activates the Arp2/3 complex. Actin polymerization and dynamin may promote the fission of membrane tubules to form endocytic vesicles. Required for the formation of podosomes, actin-rich adhesion structures specific to monocyte-derived cells. Required for translocation of GLUT4 to the plasma membrane in response to insulin signaling. May be required for the lysosomal retention of FASLG/FASL. This Rattus norvegicus (Rat) protein is Cdc42-interacting protein 4 (Trip10).